We begin with the raw amino-acid sequence, 632 residues long: Transcription factor tazR (632 aa).

Residues 20-47 (CNECRARKLRCDRVRPTCGTCESLGVTC) constitute a DNA-binding region (zn(2)-C6 fungal-type). Positions 77-130 (WNGQQKAAGGSPGESPPCSEGGQTLRAVSESTSDGVHDEDHANGARPPSSQSSI) are disordered.

It is found in the nucleus. Its function is as follows. Transcription factor that regulates the expression of the gene cluster that mediates the biosynthesis of azaterrilone A and other azaphilones, a class of fungal metabolites characterized by a highly oxygenated pyrano-quinone bicyclic core and exhibiting a broad range of bioactivities. The chain is Transcription factor tazR from Aspergillus terreus (strain NIH 2624 / FGSC A1156).